Here is a 158-residue protein sequence, read N- to C-terminus: MSYTVIYAGTFDPMTNGHLDIIERASELFGQVIVAVAKNPSKQPLFSLEERTALVRQSCAHLANVQAVGFSGLLADFAKQHQAKALVRGIRGSDDIEYEIRLAQLNDKLSGRLDTVFLPPSVTWRYLSSTMVREIYRHQGDVAQFVPNAVLCALKEKE.

Thr-10 serves as a coordination point for substrate. ATP contacts are provided by residues 10 to 11 (TF) and His-18. The substrate site is built by Lys-42, Leu-74, and Arg-88. Residues 89–91 (GIR), Glu-99, and 124–130 (WRYLSST) contribute to the ATP site.

It belongs to the bacterial CoaD family. Homohexamer. Mg(2+) serves as cofactor.

The protein resides in the cytoplasm. The enzyme catalyses (R)-4'-phosphopantetheine + ATP + H(+) = 3'-dephospho-CoA + diphosphate. It functions in the pathway cofactor biosynthesis; coenzyme A biosynthesis; CoA from (R)-pantothenate: step 4/5. Reversibly transfers an adenylyl group from ATP to 4'-phosphopantetheine, yielding dephospho-CoA (dPCoA) and pyrophosphate. The polypeptide is Phosphopantetheine adenylyltransferase (Actinobacillus pleuropneumoniae serotype 7 (strain AP76)).